Consider the following 233-residue polypeptide: Partner of Y14 and mago (233 aa).

Residues methionine 1–glutamate 153 form a disordered region. Positions glutamate 62–alanine 97 form a coiled coil. The segment covering glutamine 65 to asparagine 90 has biased composition (basic and acidic residues). A compositionally biased stretch (low complexity) spans lysine 122–alanine 142. A coiled-coil region spans residues alanine 167–aspartate 199.

It belongs to the pym family. In terms of assembly, interacts (via N-terminus) with mago and tsu/Y14; the interaction is direct.

Its subcellular location is the cytoplasm. The protein localises to the nucleus. Its function is as follows. Regulator of the exon junction complex (EJC), a multiprotein complex that associates immediately upstream of the exon-exon junction on mRNAs and serves as a positional landmarks for the intron exon structure of genes and directs post-transcriptional processes in the cytoplasm such as mRNA export, nonsense-mediated mRNA decay (NMD) or translation. This is Partner of Y14 and mago from Anopheles gambiae (African malaria mosquito).